Reading from the N-terminus, the 199-residue chain is Chaperone protein TorD (199 aa).

It belongs to the TorD/DmsD family. TorD subfamily.

The protein resides in the cytoplasm. In terms of biological role, involved in the biogenesis of TorA. Acts on TorA before the insertion of the molybdenum cofactor and, as a result, probably favors a conformation of the apoenzyme that is competent for acquiring the cofactor. The protein is Chaperone protein TorD of Escherichia coli O7:K1 (strain IAI39 / ExPEC).